A 214-amino-acid chain; its full sequence is Octanoyltransferase (214 aa).

Residues 34–214 form the BPL/LPL catalytic domain; that stretch reads GVQKELVWLL…KFNEIFSNFN (181 aa). Substrate contacts are provided by residues 73–80, 145–147, and 158–160; these read RGGKYTYH, AFG, and GVS. Cys-176 acts as the Acyl-thioester intermediate in catalysis.

Belongs to the LipB family.

The protein resides in the cytoplasm. The catalysed reaction is octanoyl-[ACP] + L-lysyl-[protein] = N(6)-octanoyl-L-lysyl-[protein] + holo-[ACP] + H(+). It participates in protein modification; protein lipoylation via endogenous pathway; protein N(6)-(lipoyl)lysine from octanoyl-[acyl-carrier-protein]: step 1/2. Catalyzes the transfer of endogenously produced octanoic acid from octanoyl-acyl-carrier-protein onto the lipoyl domains of lipoate-dependent enzymes. Lipoyl-ACP can also act as a substrate although octanoyl-ACP is likely to be the physiological substrate. The sequence is that of Octanoyltransferase from Ehrlichia chaffeensis (strain ATCC CRL-10679 / Arkansas).